We begin with the raw amino-acid sequence, 60 residues long: Metallothionein A (60 aa).

The beta stretch occupies residues 1 to 28 (MDPCECSKSGNCNCGGSCTCTNCSCKSC). Residues cysteine 4, cysteine 6, cysteine 12, cysteine 14, cysteine 18, cysteine 20, cysteine 23, cysteine 25, cysteine 28, cysteine 32, cysteine 33, cysteine 35, cysteine 36, cysteine 40, cysteine 43, cysteine 47, cysteine 49, cysteine 54, cysteine 58, and cysteine 59 each coordinate a divalent metal cation. The tract at residues 29-60 (KKSCCPCCPSGCTKCASGCVCIGKTCDTSCCQ) is alpha.

This sequence belongs to the metallothionein superfamily. Type 1 family.

Metallothioneins have a high content of cysteine residues that bind various heavy metals. The chain is Metallothionein A (mta) from Chaenocephalus aceratus (Blackfin icefish).